Consider the following 210-residue polypeptide: MNIVYWFTFEDRVKNKTPPYYYIGSKLNCSFENGIIYDSSGKEYWSSCKQKRFLNALMLQKPSVKIIQIDDDLDVIEAERKYQLEVNARDNPDYFNLVYAGGGFGVSGETHPAKDPEVREHMRLANYMNRDDFRPWKTSRANIESWKLSHIAYENYVLLLSSNLYGKTPGWRRVKGNINITDTTAKSMVKYFNSGWIPLEDPEYCELCQL.

This is an uncharacterized protein from Escherichia coli (Bacteriophage T4).